Here is a 120-residue protein sequence, read N- to C-terminus: NAD(P)H-quinone oxidoreductase subunit 3 (120 aa).

3 helical membrane-spanning segments follow: residues 10-30, 64-84, and 89-109; these read FLGFLLIAAAVPILALVTNLI, MFALVFVIFDVETVFLYPWAV, and LGLLAFIEALIFIAILVIALA.

This sequence belongs to the complex I subunit 3 family. As to quaternary structure, NDH-1 can be composed of about 15 different subunits; different subcomplexes with different compositions have been identified which probably have different functions.

It localises to the cellular thylakoid membrane. It carries out the reaction a plastoquinone + NADH + (n+1) H(+)(in) = a plastoquinol + NAD(+) + n H(+)(out). The enzyme catalyses a plastoquinone + NADPH + (n+1) H(+)(in) = a plastoquinol + NADP(+) + n H(+)(out). Functionally, NDH-1 shuttles electrons from an unknown electron donor, via FMN and iron-sulfur (Fe-S) centers, to quinones in the respiratory and/or the photosynthetic chain. The immediate electron acceptor for the enzyme in this species is believed to be plastoquinone. Couples the redox reaction to proton translocation, and thus conserves the redox energy in a proton gradient. Cyanobacterial NDH-1 also plays a role in inorganic carbon-concentration. This chain is NAD(P)H-quinone oxidoreductase subunit 3, found in Prochlorococcus marinus (strain MIT 9312).